Here is a 72-residue protein sequence, read N- to C-terminus: Protein kish-A (72 aa).

The signal sequence occupies residues 1 to 26 (MSAIFNFQSLLTVILLLICTCAYIRS). At 27–53 (LAPSLLDKNKSGLLGIFWKCARIGERK) the chain is on the extracellular side. An N-linked (GlcNAc...) asparagine glycan is attached at asparagine 35. Residues 54 to 71 (SPYVAVCCVVMAFSILFM) form a helical membrane-spanning segment. A topological domain (cytoplasmic) is located at residue glutamine 72.

It belongs to the KISH family.

It localises to the golgi apparatus membrane. In terms of biological role, involved in the early part of the secretory pathway. In Taeniopygia guttata (Zebra finch), this protein is Protein kish-A (TMEM167A).